The following is a 213-amino-acid chain: Octanoyltransferase (213 aa).

Residues 35 to 213 enclose the BPL/LPL catalytic domain; the sequence is DERGDAVLLL…ERHLPTLIEP (179 aa). Substrate is bound by residues 73-80, 145-147, and 158-160; these read RGGKITWH, AIG, and GFS. Residue Cys-176 is the Acyl-thioester intermediate of the active site.

The protein belongs to the LipB family.

The protein localises to the cytoplasm. It carries out the reaction octanoyl-[ACP] + L-lysyl-[protein] = N(6)-octanoyl-L-lysyl-[protein] + holo-[ACP] + H(+). It participates in protein modification; protein lipoylation via endogenous pathway; protein N(6)-(lipoyl)lysine from octanoyl-[acyl-carrier-protein]: step 1/2. Catalyzes the transfer of endogenously produced octanoic acid from octanoyl-acyl-carrier-protein onto the lipoyl domains of lipoate-dependent enzymes. Lipoyl-ACP can also act as a substrate although octanoyl-ACP is likely to be the physiological substrate. This Salinispora tropica (strain ATCC BAA-916 / DSM 44818 / JCM 13857 / NBRC 105044 / CNB-440) protein is Octanoyltransferase.